A 459-amino-acid chain; its full sequence is ATP-dependent protease ATPase subunit HslU (459 aa).

ATP-binding positions include Val21, 63–68, Asp273, Glu338, and Arg410; that span reads GVGKTE.

Belongs to the ClpX chaperone family. HslU subfamily. As to quaternary structure, a double ring-shaped homohexamer of HslV is capped on each side by a ring-shaped HslU homohexamer. The assembly of the HslU/HslV complex is dependent on binding of ATP.

The protein localises to the cytoplasm. ATPase subunit of a proteasome-like degradation complex; this subunit has chaperone activity. The binding of ATP and its subsequent hydrolysis by HslU are essential for unfolding of protein substrates subsequently hydrolyzed by HslV. HslU recognizes the N-terminal part of its protein substrates and unfolds these before they are guided to HslV for hydrolysis. The sequence is that of ATP-dependent protease ATPase subunit HslU from Thermosipho africanus (strain TCF52B).